Reading from the N-terminus, the 199-residue chain is UPF0462 protein C4orf33 (199 aa).

Belongs to the UPF0462 family.

This chain is UPF0462 protein C4orf33 (C4orf33), found in Homo sapiens (Human).